We begin with the raw amino-acid sequence, 374 residues long: Type IV secretion system protein PtlG homolog (374 aa).

Residues Trp-38–Trp-56 form a helical membrane-spanning segment. Residues Pro-87–Pro-116 are disordered. Residues Pro-92–Pro-116 show a composition bias toward pro residues.

This sequence belongs to the TrbI/VirB10 family.

It is found in the cell membrane. In Bordetella parapertussis (strain 12822 / ATCC BAA-587 / NCTC 13253), this protein is Type IV secretion system protein PtlG homolog (ptlG).